Here is a 491-residue protein sequence, read N- to C-terminus: UDP-N-acetylmuramate--L-alanine ligase (491 aa).

Residue 126–132 (GTHGKTT) coordinates ATP.

This sequence belongs to the MurCDEF family.

It is found in the cytoplasm. The catalysed reaction is UDP-N-acetyl-alpha-D-muramate + L-alanine + ATP = UDP-N-acetyl-alpha-D-muramoyl-L-alanine + ADP + phosphate + H(+). The protein operates within cell wall biogenesis; peptidoglycan biosynthesis. Functionally, cell wall formation. In Escherichia coli O1:K1 / APEC, this protein is UDP-N-acetylmuramate--L-alanine ligase.